A 454-amino-acid polypeptide reads, in one-letter code: tRNA modification GTPase MnmE (454 aa).

(6S)-5-formyl-5,6,7,8-tetrahydrofolate is bound by residues Arg-23, Glu-80, and Lys-120. Positions 216-377 (GMKVVIAGKP…LRTHLKQSMG (162 aa)) constitute a TrmE-type G domain. Residue Asn-226 participates in K(+) binding. GTP contacts are provided by residues 226–231 (NAGKSS), 245–251 (TAIAGTT), 270–273 (DTAG), and 335–338 (NKAD). Ser-230 contacts Mg(2+). K(+) is bound by residues Thr-245, Ile-247, and Thr-250. Thr-251 contributes to the Mg(2+) binding site. A (6S)-5-formyl-5,6,7,8-tetrahydrofolate-binding site is contributed by Lys-454.

This sequence belongs to the TRAFAC class TrmE-Era-EngA-EngB-Septin-like GTPase superfamily. TrmE GTPase family. Homodimer. Heterotetramer of two MnmE and two MnmG subunits. K(+) is required as a cofactor.

It localises to the cytoplasm. Its function is as follows. Exhibits a very high intrinsic GTPase hydrolysis rate. Involved in the addition of a carboxymethylaminomethyl (cmnm) group at the wobble position (U34) of certain tRNAs, forming tRNA-cmnm(5)s(2)U34. The chain is tRNA modification GTPase MnmE from Sodalis glossinidius (strain morsitans).